Here is a 159-residue protein sequence, read N- to C-terminus: MARFPITIKGFHKLEQELKHLKYVERLKITTDISTAREFGDLSENAEYKAAKERQLLNDKKIYDLENKLANAEVIEITKINSNSVKFGARVVLLDLDTEKEVVYQIVGEYEADITQNLISIASPIAQALIGKKAGDIIEVITPKGGRFYELLKVQYVDF.

The protein belongs to the GreA/GreB family.

Necessary for efficient RNA polymerase transcription elongation past template-encoded arresting sites. The arresting sites in DNA have the property of trapping a certain fraction of elongating RNA polymerases that pass through, resulting in locked ternary complexes. Cleavage of the nascent transcript by cleavage factors such as GreA or GreB allows the resumption of elongation from the new 3'terminus. GreA releases sequences of 2 to 3 nucleotides. In Orientia tsutsugamushi (strain Boryong) (Rickettsia tsutsugamushi), this protein is Transcription elongation factor GreA.